We begin with the raw amino-acid sequence, 99 residues long: Plastocyanin (99 aa).

The Plastocyanin-like domain maps to 1–99 (IEVLLGGGDG…AGMVGKVTVN (99 aa)). Residues His-37, Cys-84, His-87, and Met-92 each coordinate Cu cation.

Belongs to the plastocyanin family. Requires Cu(2+) as cofactor.

The protein resides in the plastid. It localises to the chloroplast thylakoid membrane. In terms of biological role, participates in electron transfer between P700 and the cytochrome b6-f complex in photosystem I. This Capsella bursa-pastoris (Shepherd's purse) protein is Plastocyanin (PETE).